The following is a 267-amino-acid chain: Eukaryotic translation initiation factor 3 subunit J (267 aa).

The disordered stretch occupies residues 1–70 (MSWNDDDVFA…KDKKSSTDQV (70 aa)). Acidic residues predominate over residues 24-38 (WDAEEPIMESWDAEE). Basic and acidic residues predominate over residues 39 to 66 (TPAKKETSPKPDSKKNAKKDSKKDKKSS). Positions 192 to 220 (IESIRQSIATLNVLMKDKEREERRARLAK) form a coiled coil.

This sequence belongs to the eIF-3 subunit J family. In terms of assembly, component of the eukaryotic translation initiation factor 3 (eIF-3) complex.

The protein localises to the cytoplasm. Functionally, component of the eukaryotic translation initiation factor 3 (eIF-3) complex, which is involved in protein synthesis of a specialized repertoire of mRNAs and, together with other initiation factors, stimulates binding of mRNA and methionyl-tRNAi to the 40S ribosome. The eIF-3 complex specifically targets and initiates translation of a subset of mRNAs involved in cell proliferation. The polypeptide is Eukaryotic translation initiation factor 3 subunit J (Vanderwaltozyma polyspora (strain ATCC 22028 / DSM 70294 / BCRC 21397 / CBS 2163 / NBRC 10782 / NRRL Y-8283 / UCD 57-17) (Kluyveromyces polysporus)).